An 851-amino-acid chain; its full sequence is Probable alpha,alpha-trehalose-phosphate synthase [UDP-forming] 7 (851 aa).

The residue at position 5 (Ser5) is a Phosphoserine. At Thr32 the chain carries Phosphothreonine. The glycosyltransferase stretch occupies residues Asp59 to Arg540.

It in the N-terminal section; belongs to the glycosyltransferase 20 family. In the C-terminal section; belongs to the trehalose phosphatase family. Binds to the phosphopeptide-binding site of GRF/14-3-3. Post-translationally, phosphorylated. In terms of tissue distribution, expressed in seedlings, leaves, roots, stems, flowers and siliques.

It catalyses the reaction D-glucose 6-phosphate + UDP-alpha-D-glucose = alpha,alpha-trehalose 6-phosphate + UDP + H(+). The chain is Probable alpha,alpha-trehalose-phosphate synthase [UDP-forming] 7 (TPS7) from Arabidopsis thaliana (Mouse-ear cress).